A 97-amino-acid polypeptide reads, in one-letter code: Aspartyl/glutamyl-tRNA(Asn/Gln) amidotransferase subunit C (97 aa).

The protein belongs to the GatC family. As to quaternary structure, heterotrimer of A, B and C subunits.

It catalyses the reaction L-glutamyl-tRNA(Gln) + L-glutamine + ATP + H2O = L-glutaminyl-tRNA(Gln) + L-glutamate + ADP + phosphate + H(+). The enzyme catalyses L-aspartyl-tRNA(Asn) + L-glutamine + ATP + H2O = L-asparaginyl-tRNA(Asn) + L-glutamate + ADP + phosphate + 2 H(+). In terms of biological role, allows the formation of correctly charged Asn-tRNA(Asn) or Gln-tRNA(Gln) through the transamidation of misacylated Asp-tRNA(Asn) or Glu-tRNA(Gln) in organisms which lack either or both of asparaginyl-tRNA or glutaminyl-tRNA synthetases. The reaction takes place in the presence of glutamine and ATP through an activated phospho-Asp-tRNA(Asn) or phospho-Glu-tRNA(Gln). The polypeptide is Aspartyl/glutamyl-tRNA(Asn/Gln) amidotransferase subunit C (Prochlorococcus marinus (strain MIT 9301)).